A 156-amino-acid polypeptide reads, in one-letter code: Small ribosomal subunit protein uS7 (156 aa).

The protein belongs to the universal ribosomal protein uS7 family. Part of the 30S ribosomal subunit. Contacts proteins S9 and S11.

In terms of biological role, one of the primary rRNA binding proteins, it binds directly to 16S rRNA where it nucleates assembly of the head domain of the 30S subunit. Is located at the subunit interface close to the decoding center, probably blocks exit of the E-site tRNA. This is Small ribosomal subunit protein uS7 from Mycolicibacterium gilvum (strain PYR-GCK) (Mycobacterium gilvum (strain PYR-GCK)).